The chain runs to 566 residues: Endoglucanase G (566 aa).

An N-terminal signal peptide occupies residues 1–30 (MKKAKAIFSLVVALMVLAIFCFAQNTGSTA). Glu-226 acts as the Proton donor in catalysis. Residue Glu-381 is the Nucleophile of the active site. Residues 473-494 (GTPQASDPPATPTATPTKPAAS) form a disordered region. Residues 474–494 (TPQASDPPATPTATPTKPAAS) are compositionally biased toward low complexity. In terms of domain architecture, Dockerin spans 497–564 (PSFIYGDINS…LLRSIDKLPH (68 aa)).

Belongs to the glycosyl hydrolase 5 (cellulase A) family.

It carries out the reaction Endohydrolysis of (1-&gt;4)-beta-D-glucosidic linkages in cellulose, lichenin and cereal beta-D-glucans.. This enzyme catalyzes the endohydrolysis of 1,4-beta-glucosidic linkages in cellulose, lichenin and cereal beta-D-glucans. The protein is Endoglucanase G (celG) of Acetivibrio thermocellus (strain ATCC 27405 / DSM 1237 / JCM 9322 / NBRC 103400 / NCIMB 10682 / NRRL B-4536 / VPI 7372) (Clostridium thermocellum).